The chain runs to 433 residues: Enolase (433 aa).

Residue Gln164 coordinates (2R)-2-phosphoglycerate. The active-site Proton donor is the Glu206. Positions 243, 289, and 316 each coordinate Mg(2+). 4 residues coordinate (2R)-2-phosphoglycerate: Lys341, Arg370, Ser371, and Lys392. Lys341 acts as the Proton acceptor in catalysis.

It belongs to the enolase family. Mg(2+) serves as cofactor.

It is found in the cytoplasm. It localises to the secreted. The protein localises to the cell surface. The enzyme catalyses (2R)-2-phosphoglycerate = phosphoenolpyruvate + H2O. It functions in the pathway carbohydrate degradation; glycolysis; pyruvate from D-glyceraldehyde 3-phosphate: step 4/5. Catalyzes the reversible conversion of 2-phosphoglycerate (2-PG) into phosphoenolpyruvate (PEP). It is essential for the degradation of carbohydrates via glycolysis. This Borreliella burgdorferi (strain ATCC 35210 / DSM 4680 / CIP 102532 / B31) (Borrelia burgdorferi) protein is Enolase.